The primary structure comprises 227 residues: Orotate phosphoribosyltransferase 2 (227 aa).

41-42 (FF) is an orotate binding site. Residues 79-80 (YK), arginine 109, lysine 110, lysine 113, histidine 115, and 135-143 (DDVMTAGTA) contribute to the 5-phospho-alpha-D-ribose 1-diphosphate site. Orotate is bound by residues threonine 139 and arginine 167.

It belongs to the purine/pyrimidine phosphoribosyltransferase family. PyrE subfamily. In terms of assembly, homodimer.

The catalysed reaction is orotidine 5'-phosphate + diphosphate = orotate + 5-phospho-alpha-D-ribose 1-diphosphate. The protein operates within pyrimidine metabolism; UMP biosynthesis via de novo pathway; UMP from orotate: step 1/2. Its function is as follows. Catalyzes the transfer of a ribosyl phosphate group from 5-phosphoribose 1-diphosphate to orotate, leading to the formation of orotidine monophosphate (OMP). This is Orotate phosphoribosyltransferase 2 (URA10) from Saccharomyces cerevisiae (strain ATCC 204508 / S288c) (Baker's yeast).